A 715-amino-acid chain; its full sequence is Protein sneaky (715 aa).

The Cytoplasmic segment spans residues 1–32 (MLSLLTRPFLPIFCFLYGPQSEGSTRIQCLRR). Residues 33–53 (FVTFLLGLVLGFLLWKLAALN) form a helical membrane-spanning segment. Residues 54-66 (FTLGRLFVNGATD) lie on the Extracellular side of the membrane. The helical transmembrane segment at 67 to 87 (LYVFIIFVLVTGTIFMLSLPV) threads the bilayer. The Cytoplasmic segment spans residues 88–109 (RAVILLIFVALVGKSGRTYLRA). Residues 110–130 (VAFAFIISGPIANLVENAGEV) form a helical membrane-spanning segment. Over 131–373 (ARVFVCTTVL…FERQKRIFNK (243 aa)) the chain is Extracellular. Residues 374–394 (VMGILQKILCLFMLRMVYVSI) traverse the membrane as a helical segment. At 395 to 457 (NYYVKYLNDV…FSRTHHESTT (63 aa)) the chain is on the cytoplasmic side. The helical transmembrane segment at 458–478 (VCFNLLQFLLELVTAGLFILI) threads the bilayer. Over 479-553 (DHLVVELLQI…NAHVLPKKMY (75 aa)) the chain is Extracellular. Residues 554–574 (YQLILLYLIIIVLIYQSTTFL) traverse the membrane as a helical segment. At 575–715 (RMRRVICSFF…VEVYTYRKEK (141 aa)) the chain is on the cytoplasmic side. Residues 655–691 (CMICRGLEDSTFTVCGNCGLPYCDDCAEDLNSVCFQC) form an RING-type; degenerate zinc finger.

Specifically expressed in testis.

The protein localises to the cytoplasmic vesicle. Its subcellular location is the secretory vesicle. It is found in the acrosome membrane. It localises to the cytoplasm. The protein resides in the cytoplasmic vesicle membrane. Component of the sperm acrosome membrane. Required for breakdown of the sperm plasma membrane after sperm entry into the egg, which is an essential prerequisite for successful fertilization. In Drosophila melanogaster (Fruit fly), this protein is Protein sneaky.